Reading from the N-terminus, the 251-residue chain is 3-dehydroquinate dehydratase (251 aa).

3-dehydroquinate contacts are provided by residues Glu47 to Arg49 and Arg83. The active-site Proton donor/acceptor is the His144. The active-site Schiff-base intermediate with substrate is Lys171. Residues Arg214, Ser233, and Gln237 each contribute to the 3-dehydroquinate site.

Belongs to the type-I 3-dehydroquinase family. Homodimer.

The enzyme catalyses 3-dehydroquinate = 3-dehydroshikimate + H2O. The protein operates within metabolic intermediate biosynthesis; chorismate biosynthesis; chorismate from D-erythrose 4-phosphate and phosphoenolpyruvate: step 3/7. Functionally, involved in the third step of the chorismate pathway, which leads to the biosynthesis of aromatic amino acids. Catalyzes the cis-dehydration of 3-dehydroquinate (DHQ) and introduces the first double bond of the aromatic ring to yield 3-dehydroshikimate. This Klebsiella pneumoniae (strain 342) protein is 3-dehydroquinate dehydratase.